A 1912-amino-acid polypeptide reads, in one-letter code: Chromodomain-helicase-DNA-binding protein 4 (1912 aa).

Residues Met1–Asp157 form a disordered region. Positions Asn35–Glu45 are enriched in acidic residues. Ser44 is modified (phosphoserine). Over residues Gly113–Lys131 the composition is skewed to basic residues. Lys133 is covalently cross-linked (Glycyl lysine isopeptide (Lys-Gly) (interchain with G-Cter in SUMO2)). A compositionally biased stretch (acidic residues) spans Glu135–Ser145. Glycyl lysine isopeptide (Lys-Gly) (interchain with G-Cter in SUMO2) cross-links involve residues Lys146, Lys179, and Lys297. The interval Ala243–Thr360 is disordered. The KIKL signature appears at Lys295 to Leu298. A Phosphoserine modification is found at Ser303. Lys304 participates in a covalent cross-link: Glycyl lysine isopeptide (Lys-Gly) (interchain with G-Cter in SUMO2). Ser308, Ser309, Ser310, and Ser319 each carry phosphoserine. Residues Glu311 to Asp323 show a composition bias toward acidic residues. Over residues Ser340–Lys353 the composition is skewed to basic residues. The residue at position 367 (Thr367) is a Phosphothreonine. The PHD-type 1 zinc finger occupies Gln370–Glu417. Ser428 is modified (phosphoserine). The segment at Met449–Pro496 adopts a PHD-type 2 zinc-finger fold. In terms of domain architecture, Chromo 1 spans Thr494–Lys594. 2 disordered regions span residues Trp510–Gly537 and Asn578–Pro603. The segment covering Pro513–Pro522 has biased composition (pro residues). A Phosphoserine modification is found at Ser515. Thr517 and Thr529 each carry phosphothreonine. Ser531 carries the phosphoserine modification. Residues Lys618 and Lys696 each participate in a glycyl lysine isopeptide (Lys-Gly) (interchain with G-Cter in SUMO2) cross-link. One can recognise a Chromo 2 domain in the interval Met622–Leu697. Position 703 is a phosphothreonine (Thr703). A Glycyl lysine isopeptide (Lys-Gly) (interchain with G-Cter in SUMO1); alternate cross-link involves residue Lys711. Residue Lys711 forms a Glycyl lysine isopeptide (Lys-Gly) (interchain with G-Cter in SUMO2); alternate linkage. A Helicase ATP-binding domain is found at Arg738 to Glu922. Asp751–Thr758 serves as a coordination point for ATP. The DEAH box signature appears at Asp873–His876. The Helicase C-terminal domain occupies Leu1054–Leu1203. A Phosphoserine modification is found at Ser1209. Residues Lys1212, Lys1228, Lys1239, and Lys1304 each participate in a glycyl lysine isopeptide (Lys-Gly) (interchain with G-Cter in SUMO2) cross-link. Ser1308, Ser1349, and Ser1370 each carry phosphoserine. 2 disordered regions span residues Asn1344 to Pro1401 and Glu1525 to Asp1562. Residues Lys1528 and Lys1529 each participate in a glycyl lysine isopeptide (Lys-Gly) (interchain with G-Cter in SUMO2) cross-link. Ser1531, Ser1535, and Ser1537 each carry phosphoserine. The segment covering Ser1535 to Ser1544 has biased composition (pro residues). Thr1542, Thr1549, and Thr1553 each carry phosphothreonine. Lys1565 participates in a covalent cross-link: Glycyl lysine isopeptide (Lys-Gly) (interchain with G-Cter in SUMO2). Ser1570 bears the Phosphoserine mark. The span at Ser1570–Lys1584 shows a compositional bias: basic and acidic residues. Disordered regions lie at residues Ser1570 to Glu1589 and Cys1594 to Val1644. A Glycyl lysine isopeptide (Lys-Gly) (interchain with G-Cter in SUMO2) cross-link involves residue Lys1572. Ser1576 is subject to Phosphoserine. A required for interaction with PCNT region spans residues Ile1577–Gln1912. A Glycyl lysine isopeptide (Lys-Gly) (interchain with G-Cter in SUMO2) cross-link involves residue Lys1584. The residue at position 1602 (Ser1602) is a Phosphoserine. Basic and acidic residues predominate over residues Glu1603–Val1644. Residues Lys1606, Lys1617, and Lys1636 each participate in a glycyl lysine isopeptide (Lys-Gly) (interchain with G-Cter in SUMO2) cross-link. Lys1643 is covalently cross-linked (Glycyl lysine isopeptide (Lys-Gly) (interchain with G-Cter in SUMO2); alternate). An N6-acetyllysine; alternate modification is found at Lys1643. A Glycyl lysine isopeptide (Lys-Gly) (interchain with G-Cter in SUMO2) cross-link involves residue Lys1647. A Phosphothreonine modification is found at Thr1653. Residues Lys1660 and Lys1670 each participate in a glycyl lysine isopeptide (Lys-Gly) (interchain with G-Cter in SUMO2) cross-link. At Thr1679 the chain carries Phosphothreonine. Glycyl lysine isopeptide (Lys-Gly) (interchain with G-Cter in SUMO2) cross-links involve residues Lys1687 and Lys1865.

Belongs to the SNF2/RAD54 helicase family. In terms of assembly, component of the nucleosome remodeling and deacetylase (NuRD) repressor complex, composed of core proteins MTA1, MTA2, MTA3, RBBP4, RBBP7, HDAC1, HDAC2, MBD2, MBD3, and peripherally associated proteins CDK2AP1, CDK2AP2, GATAD2A, GATAD2B, CHD3, CHD4 and CHD5. The exact stoichiometry of the NuRD complex is unknown, and some subunits such as MBD2 and MBD3, GATAD2A and GATAD2B, and CHD3, CHD4 and CHD5 define mutually exclusive NuRD complexes. Interacts with IKFZ1; the interaction is direct and when in part of the NuRD complex. Part of a complex containing ATR and HDAC2. Interacts with HDAC2; the interaction is direct. Interacts with the cohesin complex component RAD21; the interaction is direct. Interacts with the ISWI chromatin remodeling complex component SMARCA5; the interaction is direct. Interacts with ZGPAT; the interaction is direct. Interacts with ZMYND8; the interaction is direct, appears to occur with monomeric ZMYND8, and is increased following DNA damage. Interacts with BCL6. Interacts with BRD4. Interacts with CBX1. Interacts with CBX3. Interacts with CBX5. Interacts with GATAD2A. Interacts with HDAC1. Interacts with KLF1; the interaction depends on sumoylation of KLF1, and leads to its transcriptional repression. Interacts with MTA1. Interacts with PCNT. Interacts with RBBP7. Interacts with SETX. Interacts with TRIM27. Interacts with histone H3. Interacts with histone H4. Does not interact with PWWP2A. Does not interact with PWWP2B. Interacts (via KIKL motif) with BRD3 (via NET domain). Requires Zn(2+) as cofactor. In terms of tissue distribution, widely expressed.

It localises to the nucleus. The protein resides in the cytoplasm. It is found in the cytoskeleton. The protein localises to the microtubule organizing center. Its subcellular location is the centrosome. It carries out the reaction ATP + H2O = ADP + phosphate + H(+). ATP-dependent chromatin-remodeling factor that binds and distorts nucleosomal DNA. Acts as a component of the histone deacetylase NuRD complex which participates in the remodeling of chromatin. Localizes to acetylated damaged chromatin in a ZMYND8-dependent manner, to promote transcriptional repression and double-strand break repair by homologous recombination. Involved in neurogenesis. The sequence is that of Chromodomain-helicase-DNA-binding protein 4 (CHD4) from Homo sapiens (Human).